The chain runs to 121 residues: Protein YxiB (121 aa).

The protein is Protein YxiB (yxiB) of Bacillus subtilis (strain 168).